Here is a 248-residue protein sequence, read N- to C-terminus: ATP synthase subunit a, chloroplastic (248 aa).

Helical transmembrane passes span 37 to 57 (AQVL…AVLA), 96 to 116 (VPFI…GALF), 135 to 155 (INTT…AGLH), 200 to 220 (LVVA…MMFL), and 221 to 241 (GLFT…AYIG).

It belongs to the ATPase A chain family. In terms of assembly, F-type ATPases have 2 components, CF(1) - the catalytic core - and CF(0) - the membrane proton channel. CF(1) has five subunits: alpha(3), beta(3), gamma(1), delta(1), epsilon(1). CF(0) has four main subunits: a, b, b' and c.

It is found in the plastid. Its subcellular location is the chloroplast thylakoid membrane. Functionally, key component of the proton channel; it plays a direct role in the translocation of protons across the membrane. This Marchantia polymorpha (Common liverwort) protein is ATP synthase subunit a, chloroplastic.